The sequence spans 453 residues: tRNA modification GTPase MnmE (453 aa).

Residues Arg-22, Glu-79, and Lys-119 each contribute to the (6S)-5-formyl-5,6,7,8-tetrahydrofolate site. The 162-residue stretch at 215–376 (GMKVVIAGRP…LKQHLKSLMG (162 aa)) folds into the TrmE-type G domain. Asn-225 serves as a coordination point for K(+). GTP is bound by residues 225-230 (NAGKSS), 244-250 (TDIAGTT), 269-272 (DTAG), and 334-337 (NKAD). Ser-229 contributes to the Mg(2+) binding site. 3 residues coordinate K(+): Thr-244, Ile-246, and Thr-249. Mg(2+) is bound at residue Thr-250. Lys-453 contributes to the (6S)-5-formyl-5,6,7,8-tetrahydrofolate binding site.

Belongs to the TRAFAC class TrmE-Era-EngA-EngB-Septin-like GTPase superfamily. TrmE GTPase family. Homodimer. Heterotetramer of two MnmE and two MnmG subunits. K(+) serves as cofactor.

Its subcellular location is the cytoplasm. Exhibits a very high intrinsic GTPase hydrolysis rate. Involved in the addition of a carboxymethylaminomethyl (cmnm) group at the wobble position (U34) of certain tRNAs, forming tRNA-cmnm(5)s(2)U34. This chain is tRNA modification GTPase MnmE, found in Shewanella amazonensis (strain ATCC BAA-1098 / SB2B).